Here is an 841-residue protein sequence, read N- to C-terminus: MGRVEYLKKEYSDEEIYEILEKPVKEWFKRKYKTFTPPQRYAIKEIHEGKNVLICSPTGSGKTLSAFLAGINELIKLSMENKLEDRIYILYVSPLRALNNDIERNLKEPLKEIYDVAKEIGIELDEIRVAVRTSDTTSSQKQRMLKKPPHILITTPESLAIALNSPKFSQLLSGIKYVIVDEIHALTNKRGVHLSLSLERLNRIANFIRIGLSATIHPLTEVAKFLVGNGRDCYIVDVSYKKEIEIKVISPVDDFIYTPSEEISKRLYNLLKKLIEEHKTTLIFTNTRSATERVAFYLKQLGVEKVETHHSSLSREHRLEVEEKLKKGEIRVCISSTSLELGVDIGSIDLVILLGSPKSVSRALQRIGRSGHRLHEKSKGIIIPFDRDDLVENVVLAYDAKIGKIDRIHIPKNCLDVLAQHLVGMALEKVWDVDEAYNLIKKAYPYKDLSKKDFLDVLNYLAGGIEEKNVYAKIWLKDNKFGKRGKSVRAIYYMNVGTIPDETAVDVIADGKYVGEVEEEFAEKLMKGDIFVLGGKTYKYLGGRGNKIRVKEVFDEKPTIPAWFSEQLPLAYDLALDIEKFRKEVLSSDIEEIREKYDIDEKTAKAIKNYMDEQNKFAIVPDDEKVLIENFDEEKRRYYIFHFVAGRRANEALARAFANYISKIKKCNVRISVNDYGFALILPKNRKIKRADITELFNLDVVKNVKESIERSEILKRRFRHVATRGFMILRRYMNRKISVDRQQFNAEMLLKYCKEVNHPLYRETLREILEDSLDIDNALDYFEKIKRRKIYYLELPSPSPFAFNLVVSASSDVIFMEDKKKMIAELHKKVMEFISMKGKK.

Gln-39, Lys-62, Thr-63, Asp-181, Glu-182, Ile-352, Arg-369, and His-372 together coordinate ATP. A Helicase ATP-binding domain is found at 43 to 234 (IKEIHEGKNV…FLVGNGRDCY (192 aa)). The short motif at 181 to 184 (DEIH) is the DEVH box element. The 151-residue stretch at 266-416 (RLYNLLKKLI…RIHIPKNCLD (151 aa)) folds into the Helicase C-terminal domain. The interval 417–500 (VLAQHLVGMA…IYYMNVGTIP (84 aa)) is WH domain. The segment at 501 to 841 (DETAVDVIAD…MEFISMKGKK (341 aa)) is domain 4.

Belongs to the Lhr helicase family. Lhr-Core subfamily. In terms of assembly, monomer.

It catalyses the reaction Couples ATP hydrolysis with the unwinding of duplex DNA by translocating in the 3'-5' direction.. The catalysed reaction is ATP + H2O = ADP + phosphate + H(+). In terms of biological role, DNA helicase that loads on single-stranded (ss)DNA and translocates in a 3'-5' direction, probably involved in DNA repair. Archaeal orthologs have double-stranded (ds)DNA and/or RNA:DNA helicase activity. The protein is ATP-dependent helicase Lhr-Core of Methanocaldococcus jannaschii (strain ATCC 43067 / DSM 2661 / JAL-1 / JCM 10045 / NBRC 100440) (Methanococcus jannaschii).